Reading from the N-terminus, the 686-residue chain is Chondroitin proteoglycan 1 (686 aa).

A signal peptide spans 1–18 (MLPKSVLIVAFLVASSSA). A glycan (N-linked (GlcNAc...) asparagine) is linked at asparagine 46. The region spanning 63 to 120 (DTDCSTKEDGLYAIGGCSPQFLTCSGGIARIMDCPANLIYDQRIIACEYSYNVPECSG) is the Chitin-binding type-2 1 domain. The cysteines at positions 96 and 109 are disulfide-linked. Residue asparagine 143 is glycosylated (N-linked (GlcNAc...) asparagine). The region spanning 228–285 (DKTCNGKADGFYSFGQCSDHYIACSNGYTIPMQCPARLSFDEARVICDYTMNVPECQN) is the Chitin-binding type-2 2 domain. Cysteine 261 and cysteine 274 are disulfide-bonded. A disordered region spans residues 284–312 (QNGSGNYEGSAEETTTEASGELPYSNGYG). N-linked (GlcNAc...) asparagine glycosylation is found at asparagine 285, asparagine 635, and asparagine 664. The tract at residues 658–686 (KLRSATNRTSTKEATTRTQNMHAHYHRNH) is disordered.

Functionally, required for polar body extrusion during cytokinesis in embryo development. Affects cortical granule size. Shown to have roles in meiotic chromosome segregation, osmotic barrier function and polarization in conjunction with cpg-2. Binds chitin. In Caenorhabditis briggsae, this protein is Chondroitin proteoglycan 1 (cpg-1).